Reading from the N-terminus, the 261-residue chain is MICOS complex subunit Mic25 (261 aa).

Gly-2 is lipidated: N-myristoyl glycine. Phosphoserine occurs at positions 13, 31, and 33. 3 disordered regions span residues 39-59 (KDCSQPSAGEQLAPGPGPECS), 81-114 (CGPAEGTYKAPQGDFKVSRAENSDGQQSSAVKED), and 140-165 (TEKHLKASLPKKKATHEQQQSDRLTR). Residues 109–202 (SAVKEDLKKF…AELYKLSSQQ (94 aa)) are a coiled coil. The segment covering 154–165 (THEQQQSDRLTR) has biased composition (basic and acidic residues). One can recognise a CHCH domain in the interval 220–261 (EPVCSGLQAQILRCYRDHLHEVLLCSDLAKAYQHCVSTARKG). Short sequence motifs (cx9C motif) lie at residues 223-233 (CSGLQAQILRC) and 244-254 (CSDLAKAYQHC). 2 cysteine pairs are disulfide-bonded: Cys-223-Cys-254 and Cys-233-Cys-244.

It belongs to the MICOS complex subunit Mic19 family. Metazoan Mic25 subfamily. As to quaternary structure, component of the mitochondrial contact site and cristae organizing system (MICOS) complex, composed of at least MICOS10/MIC10, CHCHD3/MIC19, CHCHD6/MIC25, APOOL/MIC27, IMMT/MIC60, APOO/MIC23/MIC26 and MICOS13/MIC13. This complex was also known under the names MINOS or MitOS complex. The MICOS complex associates with mitochondrial outer membrane proteins SAMM50, MTX1 and MTX2 (together described as components of the mitochondrial outer membrane sorting assembly machinery (SAM) complex) and DNAJC11, mitochondrial inner membrane protein TMEM11 and with HSPA9. The MICOS and SAM complexes together with DNAJC11 are part of a large protein complex spanning both membranes termed the mitochondrial intermembrane space bridging (MIB) complex. Interacts with DISC1. Interacts with IMMT/MIC60.

Its subcellular location is the mitochondrion inner membrane. It is found in the mitochondrion. In terms of biological role, component of the MICOS complex, a large protein complex of the mitochondrial inner membrane that plays crucial roles in the maintenance of crista junctions, inner membrane architecture, and formation of contact sites to the outer membrane. The protein is MICOS complex subunit Mic25 (Chchd6) of Rattus norvegicus (Rat).